The primary structure comprises 613 residues: Envelope glycoprotein gp95 (613 aa).

The signal sequence occupies residues 1 to 62 (MEAVIKAVLT…VLCEVTGVRA (62 aa)). Residues 14 to 36 (GETSKKDSKKKPPATSKKDPEKT) are disordered. At 63–559 (DVHLLEQPGN…EWAVHLLKGL (497 aa)) the chain is on the extracellular side. Intrachain disulfides connect C87-C506, C121-C151, C191-C252, C265-C275, C360-C377, C417-C453, and C498-C505. 11 N-linked (GlcNAc...) asparagine; by host glycosylation sites follow: N120, N140, N157, N177, N230, N264, N271, N297, N303, N313, and N321. Positions 184–233 (IPSVAGGCIGFTPYDSPAGVYGWDRREVTHILLTDPGNNPFFDKASNSSK) are binding to host receptor. The binding to host receptor stretch occupies residues 268-294 (MRQNWSICQDVWGRGPPENWCTSTGGT). N-linked (GlcNAc...) asparagine; by host glycans are attached at residues N388 and N398. The fusion peptide stretch occupies residues 425 to 445 (GPTARIFASILAPGVAAAQAL). N460 carries N-linked (GlcNAc...) asparagine; by host glycosylation. Residues 481–497 (LQNRAAIDFLLLAHGHG) form an immunosuppression region. N508 carries an N-linked (GlcNAc...) asparagine; by host glycan. A helical transmembrane segment spans residues 560-580 (LLGLVVILLLVVCLPCLLQIV). 2 S-palmitoyl cysteine; by host lipidation sites follow: C572 and C575. Residues 581–613 (CGNIRKMINNSISYHTEYKKLQKAYGQPESRIV) are Extracellular-facing. A glycan (N-linked (GlcNAc...) asparagine; by host) is linked at N589.

The protein belongs to the Alpharetroviruses envelope glycoprotein family. Heterodimer with the transmembrane protein. The mature envelope protein (Env) consists of a trimer of SU-TM heterodimers attached by a labile interchain disulfide bond. Interacts with the host cell entry receptor TVB-S3; this interaction allows the viral attachment. In terms of assembly, heterodimer with the surface protein. The mature envelope protein (Env) consists of a trimer of SU-TM heterodimers attached by a labile interchain disulfide bond. In terms of processing, specific enzymatic cleavages in vivo yield mature proteins. Envelope glycoproteins are synthesized as an inactive precursor that is N-glycosylated and processed likely by host cell furin or by a furin-like protease in the Golgi to yield the mature SU and TM proteins. The cleavage site between SU and TM requires the minimal sequence [KR]-X-[KR]-R. Post-translationally, the transmembrane protein is palmitoylated. Palmitoylation is necessary for glycoprotein function and infectivity.

The protein resides in the virion membrane. It localises to the host cell membrane. Its function is as follows. The surface protein (SU) attaches the virus to the host cell entry receptor TVB-S3/CAR1. This interaction triggers the refolding of the transmembrane protein (TM) thereby unmasking its fusion peptide and the formation of a reactive thiolate on Cys-100 to activate its fusogenic potential. Fusion occurs at the host cell plasma membrane. Functionally, the transmembrane protein (TM) acts as a class I viral fusion protein. Under the current model, the protein has at least 3 conformational states: pre-fusion native state, pre-hairpin intermediate state, and post-fusion hairpin state. During viral and target cell membrane fusion, the coiled coil regions (heptad repeats) assume a trimer-of-hairpins structure, positioning the fusion peptide in close proximity to the C-terminal region of the ectodomain. The formation of this structure appears to drive apposition and subsequent fusion of viral and target cell membranes. Membranes fusion leads to delivery of the nucleocapsid into the cytoplasm. This chain is Envelope glycoprotein gp95 (env), found in Rous sarcoma virus subgroup B (strain Schmidt-Ruppin) (RSV-SR-B).